Consider the following 465-residue polypeptide: Cysteine--tRNA ligase (465 aa).

Cysteine 29 provides a ligand contact to Zn(2+). The 'HIGH' region motif lies at proline 31–asparagine 41. Zn(2+) contacts are provided by cysteine 209, histidine 234, and glutamate 238. A 'KMSKS' region motif is present at residues lysine 266–serine 270. Lysine 269 provides a ligand contact to ATP. The residue at position 270 (serine 270) is a Phosphoserine.

Belongs to the class-I aminoacyl-tRNA synthetase family. In terms of assembly, monomer. Requires Zn(2+) as cofactor.

Its subcellular location is the cytoplasm. The catalysed reaction is tRNA(Cys) + L-cysteine + ATP = L-cysteinyl-tRNA(Cys) + AMP + diphosphate. This chain is Cysteine--tRNA ligase, found in Bacillus thuringiensis (strain Al Hakam).